We begin with the raw amino-acid sequence, 72 residues long: MANASGNMSAVRETMDVLLEISRLLNTGLDMETLSICVRLCEQGINPEALSSVIKELRRASDTLKASESTAS.

Belongs to the MOZART1 family. As to quaternary structure, part of the gamma-tubulin complex.

It localises to the cytoplasm. Its subcellular location is the cytoskeleton. It is found in the microtubule organizing center. The protein resides in the centrosome. The protein localises to the spindle. Its function is as follows. Required for gamma-tubulin complex recruitment to the centrosome. In Xenopus laevis (African clawed frog), this protein is Mitotic-spindle organizing protein 1 (mzt1).